The chain runs to 248 residues: Adenosylcobinamide-GDP ribazoletransferase (248 aa).

6 helical membrane-spanning segments follow: residues 36–56 (FFLP…YLGL), 59–79 (FLPA…ITGG), 114–134 (GTIA…SLVL), 137–157 (YSIA…FLCL), 170–190 (IFIG…VLVL), and 199–219 (ATII…LLCL).

The protein belongs to the CobS family. Mg(2+) serves as cofactor.

Its subcellular location is the cell membrane. It carries out the reaction alpha-ribazole + adenosylcob(III)inamide-GDP = adenosylcob(III)alamin + GMP + H(+). The enzyme catalyses alpha-ribazole 5'-phosphate + adenosylcob(III)inamide-GDP = adenosylcob(III)alamin 5'-phosphate + GMP + H(+). The protein operates within cofactor biosynthesis; adenosylcobalamin biosynthesis; adenosylcobalamin from cob(II)yrinate a,c-diamide: step 7/7. Its function is as follows. Joins adenosylcobinamide-GDP and alpha-ribazole to generate adenosylcobalamin (Ado-cobalamin). Also synthesizes adenosylcobalamin 5'-phosphate from adenosylcobinamide-GDP and alpha-ribazole 5'-phosphate. The protein is Adenosylcobinamide-GDP ribazoletransferase of Clostridium botulinum (strain Langeland / NCTC 10281 / Type F).